The following is a 344-amino-acid chain: Arginine N-succinyltransferase (344 aa).

Leucine 125 contributes to the succinyl-CoA binding site. Catalysis depends on histidine 229, which acts as the Proton donor.

The protein belongs to the arginine N-succinyltransferase family.

It carries out the reaction succinyl-CoA + L-arginine = N(2)-succinyl-L-arginine + CoA + H(+). It participates in amino-acid degradation; L-arginine degradation via AST pathway; L-glutamate and succinate from L-arginine: step 1/5. In terms of biological role, catalyzes the transfer of succinyl-CoA to arginine to produce N(2)-succinylarginine. This Salmonella dublin (strain CT_02021853) protein is Arginine N-succinyltransferase.